The following is a 126-amino-acid chain: Large ribosomal subunit protein eL8 (126 aa).

It belongs to the eukaryotic ribosomal protein eL8 family. As to quaternary structure, part of the 50S ribosomal subunit. Probably part of the RNase P complex.

The protein localises to the cytoplasm. Functionally, multifunctional RNA-binding protein that recognizes the K-turn motif in ribosomal RNA, the RNA component of RNase P, box H/ACA, box C/D and box C'/D' sRNAs. In Sulfolobus acidocaldarius (strain ATCC 33909 / DSM 639 / JCM 8929 / NBRC 15157 / NCIMB 11770), this protein is Large ribosomal subunit protein eL8.